A 223-amino-acid chain; its full sequence is Killer cell lectin-like receptor subfamily B member 1B allele A (223 aa).

The Cytoplasmic segment spans residues 1 to 45 (MDTAVVYADLHLARTGEPKREPPPSLSPDTCQCPRWHRLALKLGC). Positions 5–10 (VVYADL) match the ITIM motif motif. The short motif at 31–34 (CQCP) is the LCK-binding motif element. The chain crosses the membrane as a helical; Signal-anchor for type II membrane protein span at residues 46-66 (ACLILLVLSVIGLGVLVLTLL). Residues 67–223 (QKPLIQNSPA…LKRESTCNDS (157 aa)) are Extracellular-facing. In terms of domain architecture, C-type lectin spans 101–211 (HQDKCFHVSQ…CDSDNIWICQ (111 aa)). 2 disulfide bridges follow: Cys-122–Cys-210 and Cys-189–Cys-202.

In terms of assembly, homodimer; disulfide-linked. Interacts with tyrosine kinase LCK. Binds PTPN6/SHP-1 in a phosphorylation-dependent manner. In terms of tissue distribution, expressed in a subset of natural killer cells.

It localises to the membrane. Functionally, receptor for CLEC2D/OCIL. Ligand-binding contributes to inhibition of cytotoxic natural killer (NK) cells. May mediate MHC class I-independent 'missing-self' recognition of allografts, tumor cells and virus-infected cells. The protein is Killer cell lectin-like receptor subfamily B member 1B allele A of Rattus norvegicus (Rat).